We begin with the raw amino-acid sequence, 296 residues long: UDP-N-acetylenolpyruvoylglucosamine reductase (296 aa).

The region spanning 18–189 (LGGRALAEVR…TGADIVLRRG (172 aa)) is the FAD-binding PCMH-type domain. Arg-166 is an active-site residue. Cys-218 serves as the catalytic Proton donor. Residue Glu-289 is part of the active site.

The protein belongs to the MurB family. It depends on FAD as a cofactor.

The protein resides in the cytoplasm. The catalysed reaction is UDP-N-acetyl-alpha-D-muramate + NADP(+) = UDP-N-acetyl-3-O-(1-carboxyvinyl)-alpha-D-glucosamine + NADPH + H(+). The protein operates within cell wall biogenesis; peptidoglycan biosynthesis. In terms of biological role, cell wall formation. In Nitratidesulfovibrio vulgaris (strain ATCC 29579 / DSM 644 / CCUG 34227 / NCIMB 8303 / VKM B-1760 / Hildenborough) (Desulfovibrio vulgaris), this protein is UDP-N-acetylenolpyruvoylglucosamine reductase.